Here is a 446-residue protein sequence, read N- to C-terminus: UPF0597 protein DvMF_1488 (446 aa).

This sequence belongs to the UPF0597 family.

The polypeptide is UPF0597 protein DvMF_1488 (Nitratidesulfovibrio vulgaris (strain DSM 19637 / Miyazaki F) (Desulfovibrio vulgaris)).